The primary structure comprises 1892 residues: MIFQSFLLGNLVSLCMKIINSVVVVGLYYGFLTTFSIGPSYLFLLRALVMEEGTEKKVSATTGFITGQLMMFISIYYAPLHLALGRPHTITVLALPYLLFHFFWNNHKHFFDYGSTTRNSMRNLSIQCVFLNNLIFQLFNHFILPSSMLARLVNIYLFRCNSKILFVTSGFVGWLIGHIFFMKWLGLVLVWIRQNHSIRSNKYIRSNKYLVLELRNSMARIFSILLFITCVYYLGRIPSPILTKKLKEASKTEERVESEEEKDVEIETASEMKGTKQEQEGSTEEDPYPSPSLFSEEGWDPDKIDETEEIRVNGKDKIKDKFHSHLTETGYNTSNCPIYDYEDSYLNNNNTGNPENFKLQLLDKKNENKELFWFQQPLVSLLFDYNRWNRPFRYIKNNRFEQAVRTEMSQYFFDTCKSDGKQRISFTYPPSLSTFWKMIKRRIPLLSLQKRLPNELDNQWISTNKEKSTNLNKEFLNRLEVLDKESFSLDILETRTRLCNDDTKKEYVPKMYDPLLNGPYRGTIKKEFSPSIINNTSLENLKERVRINRIHTIFLPNTDYQEFEQKVDTVDKKPLSTEIDEFLTLINEFDNEPKSSLNLKDLSLFSDQEQGRVNSEKRTKFVKFVFNAIDPNGTTSEKKLIGIKEISKKIPRWSHKLITELEQQSGDYQEGVPLDHQIRSRKAKRVVIFTANNQNNDPNTKDTDTADQDQTKEVALIRYSQQPDFRRGIIKGSMRAQRRKTVIWKLFQANVHSPLFLERITPPLLFSFDISGLIKPIFRNWSGKEGEFKILESREEQTKREEKKEKDKKGENKRKEKARIEIAEAWDTIPFAQIIRGYMLITQSILRKYIVLPSLIIAKNLGRMLFLQLPEWSEDLQEWNREMHIKCTYNGVQLSETEFPKNWLKDGIQIKILFPFCLKPWHISKLYSSRGELMKKKKQKDDFCFLTVWGMEAELPFGSPRKRPSFFEPIFKELEKKIGKFKKKYFITLKVLKGKIKLFRRVSKETKKWLIKSSLFIKKMKKELSKVNPIVLFRFKEIDESNETKKEKDSLISNQIINEPFSQIESGNWPNSSLIESKMKDLTDRTSTIKNQIERITKEKKKVTPEIDISPNKSPNKTNNIKKFESPKNIFQILKRRNTRLIWKFHYFLKFFIQRLYIDLFLSIINIPRINTQLFLESTNKLIDKYISKNEINQKKIHFISTIKKSLYNISKKNSHIFFDLSYLSQAYVFYKLSQTQVINLSKLRSVLQYNRTSFFLKTKLKDYFRTLGIFHSELKHKKLQSYRINQWKNWLRRHYQYDLSQIRWSRLMPQKRRNRVNQSCMAQNRNLNKWNSYEKDQLIHYKKENDSELYSLSNQKDNFKKCYRYDLLAYKSINYENKNDSFICRLPFQVNKNLEISSNSNTSKHNLFYMLGNLHINNYLRKGNILYIERNLDRKYFDWKIIHFSLRQKEDIEAWVKSDTNSNPNTKIGINNYQIIDKIEKKGLFYLTIHQNPENNQKNSKNDFFDWMGMNEKILNRPILNLEFWLFPEFVPFYNVYKIKPWIIPSKLLLLNLNTNENVSQNKNKKQNFFLRSNKKIKNRIQEEKEPASQGEKERGSDIENKGNLGPVLSKHQNALKKDYTESDTKKGKKKKQYKSNTEAELDLFLKRYLLFQLRWNDALNQRMIENIKVYCLLLRLINPSKIAISSIQRREMSLDIMLIQKNLTLTELMKKGILIIEPIRLSVKNNGQFIMYQTIGISLVHKSKHQTNQRYPEQRYVDKKNFDEFILQPQTQRINTDKNHFDLLVPENILWSRRRRELRIRSFFNSLNWNGVDRNSVFCNENNVKNWSQFLDERKPLYKEKNELIKLKFFLWPNYRLEDLACMNRYWFDTNNGSRFSILRIHMYPRLKIN.

The next 6 membrane-spanning stretches (helical) occupy residues 18–38, 64–84, 87–107, 124–144, 172–192, and 221–241; these read IINSVVVVGLYYGFLTTFSIG, FITGQLMMFISIYYAPLHLAL, PHTITVLALPYLLFHFFWNNH, LSIQCVFLNNLIFQLFNHFIL, VGWLIGHIFFMKWLGLVLVWI, and IFSILLFITCVYYLGRIPSPI. Disordered regions lie at residues 250–300, 794–814, and 1581–1609; these read SKTE…EGWD, REEQTKREEKKEKDKKGENKR, and RIQEEKEPASQGEKERGSDIENKGNLGPV. Over residues 256–268 the composition is skewed to acidic residues; that stretch reads VESEEEKDVEIET. Residues 1581-1602 are compositionally biased toward basic and acidic residues; it reads RIQEEKEPASQGEKERGSDIEN.

This sequence belongs to the TIC214 family. In terms of assembly, part of the Tic complex.

It localises to the plastid. It is found in the chloroplast inner membrane. Involved in protein precursor import into chloroplasts. May be part of an intermediate translocation complex acting as a protein-conducting channel at the inner envelope. The chain is Protein TIC 214 from Nicotiana tomentosiformis (Tobacco).